The primary structure comprises 297 residues: Ribosomal RNA small subunit methyltransferase H (297 aa).

Residues 34-36, D54, F88, D106, and Q113 each bind S-adenosyl-L-methionine; that span reads AGH. The tract at residues 272–297 is disordered; sequence PLTAGEEETDRNPRARSAKLRAAEKK.

It belongs to the methyltransferase superfamily. RsmH family.

It localises to the cytoplasm. The enzyme catalyses cytidine(1402) in 16S rRNA + S-adenosyl-L-methionine = N(4)-methylcytidine(1402) in 16S rRNA + S-adenosyl-L-homocysteine + H(+). Specifically methylates the N4 position of cytidine in position 1402 (C1402) of 16S rRNA. The polypeptide is Ribosomal RNA small subunit methyltransferase H (Acidobacterium capsulatum (strain ATCC 51196 / DSM 11244 / BCRC 80197 / JCM 7670 / NBRC 15755 / NCIMB 13165 / 161)).